A 131-amino-acid polypeptide reads, in one-letter code: MSNRERPVKPYDLTVSVTPRYVPEQSDPSQQQYVFAYTVRITNTGSHPAQVISRHWIITDGEERVQEVRGLGVVGQQPLLAPGETFEYTSGCPLPTPIGTMRGTYHCVGENGIPFEVPIAEFLLAMPRTLH.

The ApaG domain occupies 7–131; sequence PVKPYDLTVS…FLLAMPRTLH (125 aa).

This Bordetella bronchiseptica (strain ATCC BAA-588 / NCTC 13252 / RB50) (Alcaligenes bronchisepticus) protein is Protein ApaG.